Consider the following 229-residue polypeptide: Germin-like protein 2-4 (229 aa).

The N-terminal stretch at 1–23 (MAHRRRCLLLLLAVLLPAMAARG) is a signal peptide. Residues Cys32 and Cys52 are joined by a disulfide bond. An N-linked (GlcNAc...) asparagine glycan is attached at Asn57. Residues 66–213 (SGVRAAGNFS…AFGLTPAELR (148 aa)) form the Cupin type-1 domain. The Mn(2+) site is built by His115, His117, Glu122, and His161.

The protein belongs to the germin family. Oligomer (believed to be a pentamer but probably hexamer).

The protein resides in the secreted. It is found in the extracellular space. It localises to the apoplast. Functionally, may play a role in plant defense. Probably has no oxalate oxidase activity even if the active site is conserved. The protein is Germin-like protein 2-4 of Oryza sativa subsp. japonica (Rice).